Reading from the N-terminus, the 314-residue chain is Probable cell division protein WhiA (314 aa).

The segment at residues 274–305 (SLAELGDRLEISKSGANHRMRKLKALEDMINA) is a DNA-binding region (H-T-H motif).

This sequence belongs to the WhiA family.

In terms of biological role, involved in cell division and chromosome segregation. This chain is Probable cell division protein WhiA, found in Leuconostoc citreum (strain KM20).